A 321-amino-acid polypeptide reads, in one-letter code: MTPAQLRAYSAVVRLGSVRAAAAELGLSDAGVSMHVAALRKELDDPLFTRTGAGLAFTPGGLRLASRAVEILGLQQQTAIEVTEAAHGRRLLRIAASSAFAEHAAPGLIELFSSRADDLSVELSVHPTSRFRELICSRAVDIAIGPASESSIGSDGSIFLRPFLKYQIITVVAPNSPLAAGIPMPALLRHQQWMLGPSAGSVDGEIATMLRGLAIPESQQRIFQSDAAALEEVMRVGGATLAIGFAVAKDLAAGRLVHVTGPGLDRAGEWCVATLAPSARQPAVSELVGFISTPRCIQAMIPGSGVGVTRFRPKVHVTLWS.

The HTH lysR-type domain maps to 1–58; that stretch reads MTPAQLRAYSAVVRLGSVRAAAAELGLSDAGVSMHVAALRKELDDPLFTRTGAGLAFT. Residues 18-37 constitute a DNA-binding region (H-T-H motif); that stretch reads VRAAAAELGLSDAGVSMHVA.

It belongs to the LysR transcriptional regulatory family.

This is an uncharacterized protein from Mycobacterium tuberculosis (strain CDC 1551 / Oshkosh).